A 427-amino-acid chain; its full sequence is MERDFLGAIWRKEEAAGKPEEHSDYRGGGGGASAAMQWQFPATKVGAASSAFMSFRSSAAAAREEDPKEAAVFDRFSLSGFRPPPRPSPGDAFDGAAAMKQRQFGFNGRQQYAAAAQHGHREQGVDSYGVAAPHHFPSPSPSPRHPVPFGHANPMLRVHSLPNVAGGSPYRNQSFSVGNSVAGSTVGVYGGPRDLQNPKVTQMTIFYDGLVNVFDNIPVEKAQELMLLASRASIPSPPSAARKSDSPISAAAKLTVPEALPARQIVVQKPEASVPLVSGVSNPITIVSQAVTLPKSFSSSNDSAGPKSGGLPLAVTPLSQASPSQPIPVATTNASAIMPRAVPQARKASLARFLEKRKERVSSVAPYPSSKSPLESSDTIGSPSTPSKSSCTDITPSTNNCEDSLCLGQPRNISFSSQEPPSTKLQI.

The segment covering 1-25 has biased composition (basic and acidic residues); it reads MERDFLGAIWRKEEAAGKPEEHSDY. Disordered stretches follow at residues 1-32 and 128-154; these read MERDFLGAIWRKEEAAGKPEEHSDYRGGGGGA and YGVAAPHHFPSPSPSPRHPVPFGHANP. The span at 136 to 146 shows a compositional bias: pro residues; that stretch reads FPSPSPSPRHP. Residues 196-231 enclose the Tify domain; that stretch reads QNPKVTQMTIFYDGLVNVFDNIPVEKAQELMLLASR. A disordered region spans residues 296 to 327; sequence SFSSSNDSAGPKSGGLPLAVTPLSQASPSQPI. Residues 317–327 are compositionally biased toward polar residues; the sequence is PLSQASPSQPI. Residues 343-367 carry the Jas motif; the sequence is PQARKASLARFLEKRKERVSSVAPY. The short motif at 345 to 352 is the Nuclear localization signal element; sequence ARKASLAR. Residues 361–427 are disordered; that stretch reads VSSVAPYPSS…QEPPSTKLQI (67 aa). Composition is skewed to polar residues over residues 369 to 402 and 411 to 427; these read SSKSPLESSDTIGSPSTPSKSSCTDITPSTNNCE and RNISFSSQEPPSTKLQI.

The protein belongs to the TIFY/JAZ family. As to quaternary structure, interacts with COI1A. Interacts with COI1A and COI1B in a coronatine-dependent manner. Coronatine is an analog of jasmonoyl isoleucine (JA-Ile). Ubiquitinated. Targeted for degradation by the SCF(COI1) E3 ubiquitin ligase-proteasome pathway during jasmonate signaling.

Its subcellular location is the nucleus. Functionally, repressor of jasmonate responses. In Oryza sativa subsp. japonica (Rice), this protein is Protein TIFY 6a.